Here is a 131-residue protein sequence, read N- to C-terminus: Putative gamma-taxilin 2 (131 aa).

This sequence belongs to the taxilin family. As to expression, ubiquitously expressed.

The sequence is that of Putative gamma-taxilin 2 (TXLNGY) from Homo sapiens (Human).